We begin with the raw amino-acid sequence, 501 residues long: ATP synthase subunit alpha (501 aa).

169 to 176 (GDRQTGKT) contacts ATP.

It belongs to the ATPase alpha/beta chains family. In terms of assembly, F-type ATPases have 2 components, CF(1) - the catalytic core - and CF(0) - the membrane proton channel. CF(1) has five subunits: alpha(3), beta(3), gamma(1), delta(1), epsilon(1). CF(0) has three main subunits: a(1), b(2) and c(9-12). The alpha and beta chains form an alternating ring which encloses part of the gamma chain. CF(1) is attached to CF(0) by a central stalk formed by the gamma and epsilon chains, while a peripheral stalk is formed by the delta and b chains.

The protein resides in the cell membrane. It carries out the reaction ATP + H2O + 4 H(+)(in) = ADP + phosphate + 5 H(+)(out). Produces ATP from ADP in the presence of a proton gradient across the membrane. The alpha chain is a regulatory subunit. In Streptococcus equi subsp. equi (strain 4047), this protein is ATP synthase subunit alpha.